The following is a 390-amino-acid chain: MTSQEHPNWLTALLVDTRPPPKLFAWSPANIQPKLDEGIDMGSSNSDEEYDNDACVCQSTDSDQRIYIIGPGNIGRLYATHMARHPNALPITLVVHRKELLSQWVACEGVGLADITSGKLFLNKGFTVEWWTETRPPYGPVKEVADGKKLHNVFISTKAEAGLAEADRIRRYLGRCSSVVFAQNGVCKLWPPHGPLYISHRYPSGDTPTFSACVVSHGVASAGPFLSVHAAPADAYIGPVFWASDPESPWRHPSDDFFIRHIATTPHVNTKQVSSGEIWLLQLEKLVMNAAINPLTALLRCKTGELFTSYGSDDPLALVIDKLLWQTSAVIQGLVDHKTSHSVITSYAEHMSQPGTSCSVPKVRKKLMERFSQPILKAKLGWEEDRDTGL.

70 to 75 (GPGNIG) is an NADP(+) binding site. The Proton donor role is filled by Lys-285. 2 residues coordinate substrate: Asn-289 and Asn-293.

It belongs to the ketopantoate reductase family.

The catalysed reaction is (R)-2-hydroxy-3-methylbutanoate + NADP(+) = 3-methyl-2-oxobutanoate + NADPH + H(+). Its activity is regulated as follows. The reductase activity is increased by Mg(2+) (195%), Ca(2+) (169%) and slightly increased by K(+) (123%). The reduction activity is inhibited by Fe(2+) and Co(2+), and almost totally inhibited by Cu(2+), Mn(2+), Zn(2+) and Fe(3+) (from 3% to 9% residual activity respectively). The chelating agent EDTA had little effect, suggesting Mg(2+) and Ca(2+) are not determining factors, though they could promote the reductase enzyme activity. Its function is as follows. Ketoisovalerate reductase; part of the gene cluster that mediates the biosynthesis of beauvericin (BEA), a non-ribosomal cyclic hexadepsipeptide that shows antibiotic, antifungal, insecticidal, and cancer cell antiproliferative and antihaptotactic activity. Ketoisovalerate reductase BEA2 catalyzes the NADPH-specific reduction of ketoisovaleric acid to hydroxyisovalerate, a precursor for beauvericin biosynthesis. The nonribosomal cyclodepsipeptide synthetase BEA1 then catalyzes the formation of beauvericin via condensation and cyclization of 3 dipeptidol monomers, each composed of one unit of hydroxyisovalerate and one unit of N-methyl-phenylalanine. The chain is Ketoisovalerate reductase BEA2 from Gibberella intermedia (Bulb rot disease fungus).